The chain runs to 426 residues: Serine--tRNA ligase (426 aa).

233 to 235 provides a ligand contact to L-serine; that stretch reads TSE. 264-266 contacts ATP; it reads RAE. Glutamate 287 is an L-serine binding site. 351-354 provides a ligand contact to ATP; it reads EISS. An L-serine-binding site is contributed by serine 387.

The protein belongs to the class-II aminoacyl-tRNA synthetase family. Type-1 seryl-tRNA synthetase subfamily. In terms of assembly, homodimer. The tRNA molecule binds across the dimer.

The protein resides in the cytoplasm. It carries out the reaction tRNA(Ser) + L-serine + ATP = L-seryl-tRNA(Ser) + AMP + diphosphate + H(+). It catalyses the reaction tRNA(Sec) + L-serine + ATP = L-seryl-tRNA(Sec) + AMP + diphosphate + H(+). It participates in aminoacyl-tRNA biosynthesis; selenocysteinyl-tRNA(Sec) biosynthesis; L-seryl-tRNA(Sec) from L-serine and tRNA(Sec): step 1/1. Catalyzes the attachment of serine to tRNA(Ser). Is also able to aminoacylate tRNA(Sec) with serine, to form the misacylated tRNA L-seryl-tRNA(Sec), which will be further converted into selenocysteinyl-tRNA(Sec). In Xanthomonas campestris pv. campestris (strain 8004), this protein is Serine--tRNA ligase.